A 3086-amino-acid chain; its full sequence is Genome polyprotein (3086 aa).

In terms of domain architecture, Peptidase S30 spans 122–256 (RRSKILACDL…RAGIHTIKHY (135 aa)). Residues His-173, Asp-182, and Ser-215 each act as for P1 proteinase activity in the active site. Positions 590–711 (YYVAPEGYCY…TGEMLDYNVG (122 aa)) constitute a Peptidase C6 domain. Catalysis depends on for helper component proteinase activity residues Cys-598 and His-670. The Helicase ATP-binding domain occupies 1189-1341 (ISSDTANAEF…PMFPVRVSEA (153 aa)). 1202–1209 (GGVGTGKS) lines the ATP pocket. Positions 1291 to 1294 (DECH) match the DEAH box motif. Tyr-1870 carries the post-translational modification O-(5'-phospho-RNA)-tyrosine. The interval 1970-1990 (HDGELRQSRPSRPIQKDQVPA) is disordered. A Peptidase C4 domain is found at 2000-2217 (SKSIAKGLRD…VNYGTMDLTS (218 aa)). Catalysis depends on for nuclear inclusion protein A activity residues His-2045, Asp-2080, and Cys-2149. Residues 2482-2606 (WDYFDADGSR…AVEPSLSDKI (125 aa)) form the RdRp catalytic domain. The segment covering 2762 to 2821 (TAASSAATQTSTTSPTVTSTSGASTSTSSGTTSAPLASTTPPVSATTTPSTGTTAPTTPT) has biased composition (low complexity). The tract at residues 2762 to 2822 (TAASSAATQT…GTTAPTTPTV (61 aa)) is disordered. Thr-3069 is modified (phosphothreonine).

The protein belongs to the potyviridae genome polyprotein family. Post-translationally, VPg is uridylylated by the polymerase and is covalently attached to the 5'-end of the genomic RNA. This uridylylated form acts as a nucleotide-peptide primer for the polymerase. Genome polyprotein of potyviruses undergoes post-translational proteolytic processing by the main proteinase NIa-pro resulting in the production of at least ten individual proteins. The P1 proteinase and the HC-pro cleave only their respective C-termini autocatalytically. 6K1 is essential for proper proteolytic separation of P3 from CI.

The protein resides in the host cytoplasmic vesicle membrane. It is found in the host cytoplasmic vesicle. The protein localises to the virion. It catalyses the reaction RNA(n) + a ribonucleoside 5'-triphosphate = RNA(n+1) + diphosphate. The enzyme catalyses Hydrolyzes glutaminyl bonds, and activity is further restricted by preferences for the amino acids in P6 - P1' that vary with the species of potyvirus, e.g. Glu-Xaa-Xaa-Tyr-Xaa-Gln-|-(Ser or Gly) for the enzyme from tobacco etch virus. The natural substrate is the viral polyprotein, but other proteins and oligopeptides containing the appropriate consensus sequence are also cleaved.. The catalysed reaction is Hydrolyzes a Gly-|-Gly bond at its own C-terminus, commonly in the sequence -Tyr-Xaa-Val-Gly-|-Gly, in the processing of the potyviral polyprotein.. Functionally, required for aphid transmission and also has proteolytic activity. Only cleaves a Gly-Gly dipeptide at its own C-terminus. Interacts with virions and aphid stylets. Acts as a suppressor of RNA-mediated gene silencing, also known as post-transcriptional gene silencing (PTGS), a mechanism of plant viral defense that limits the accumulation of viral RNAs. May have RNA-binding activity. Has helicase activity. It may be involved in replication. Its function is as follows. Indispensable for virus replication. Reduces the abundance of host transcripts related to jasmonic acid biosynthesis therefore altering the host defenses. In order to increase its own stability, decreases host protein degradation pathways. In terms of biological role, indispensable for virus replication. Functionally, mediates the cap-independent, EIF4E-dependent translation of viral genomic RNAs. Binds to the cap-binding site of host EIF4E and thus interferes with the host EIF4E-dependent mRNA export and translation. VPg-RNA directly binds EIF4E and is a template for transcription. Also forms trimeric complexes with EIF4E-EIF4G, which are templates for translation. Has RNA-binding and proteolytic activities. Its function is as follows. An RNA-dependent RNA polymerase that plays an essential role in the virus replication. In terms of biological role, involved in aphid transmission, cell-to-cell and systemis movement, encapsidation of the viral RNA and in the regulation of viral RNA amplification. This is Genome polyprotein from Dactylis glomerata (Orchard grass).